A 152-amino-acid chain; its full sequence is UPF0266 membrane protein YobD (152 aa).

The next 3 membrane-spanning stretches (helical) occupy residues 6–26, 45–65, and 67–87; these read LVLILFIAALLAYALYDQFIM, VDSVIFVGLVAILIYNNVTSH, and AQMTTWLLSALALMGFYIFWI.

The protein belongs to the UPF0266 family.

It localises to the cell inner membrane. In Salmonella paratyphi B (strain ATCC BAA-1250 / SPB7), this protein is UPF0266 membrane protein YobD.